A 165-amino-acid polypeptide reads, in one-letter code: Lipoprotein signal peptidase (165 aa).

Transmembrane regions (helical) follow at residues 12 to 32 (WLWLVVVVLIVDLGSKALILQ), 70 to 90 (WFFAGIAIGICVLLVVMMYRA), and 102 to 122 (ALIIGGALGNLFDRLWHGFVV). Active-site residues include Asp-123 and Asp-141. Residues 137 to 157 (FNLADTAICIGAALVVLEGFL) traverse the membrane as a helical segment.

It belongs to the peptidase A8 family.

The protein resides in the cell inner membrane. It catalyses the reaction Release of signal peptides from bacterial membrane prolipoproteins. Hydrolyzes -Xaa-Yaa-Zaa-|-(S,diacylglyceryl)Cys-, in which Xaa is hydrophobic (preferably Leu), and Yaa (Ala or Ser) and Zaa (Gly or Ala) have small, neutral side chains.. The protein operates within protein modification; lipoprotein biosynthesis (signal peptide cleavage). Its function is as follows. This protein specifically catalyzes the removal of signal peptides from prolipoproteins. The sequence is that of Lipoprotein signal peptidase from Cronobacter sakazakii (strain ATCC BAA-894) (Enterobacter sakazakii).